Reading from the N-terminus, the 162-residue chain is UPF0262 protein HNE_1347 (162 aa).

Belongs to the UPF0262 family.

This is UPF0262 protein HNE_1347 from Hyphomonas neptunium (strain ATCC 15444).